The primary structure comprises 1659 residues: Intersectin-2 (1659 aa).

Residues 22 to 110 (ERTKHDKQFD…PIMKQPPMFS (89 aa)) enclose the EH 1 domain. In terms of domain architecture, EF-hand 1 spans 54 to 89 (LPAPVLAEIWALSDLNKDGKMDQQEFSIAMKLIKLK). Residues aspartate 67, asparagine 69, aspartate 71, lysine 73, and glutamate 78 each coordinate Ca(2+). Residues serine 110, serine 211, and serine 231 each carry the phosphoserine modification. Over residues 220 to 231 (STSSTASLSGNS) the composition is skewed to low complexity. Residues 220–242 (STSSTASLSGNSPKTGTSEWAVP) are disordered. The EH 2 domain maps to 245–334 (SRLKYRQKFN…PELVPPSFRG (90 aa)). The 36-residue stretch at 278–313 (LSQTQLATIWTLADIDGDGQLKAEEFILAMHLTDMA) folds into the EF-hand 2 domain. The segment at 335 to 382 (GKQVDSVNGTLPSYQKTQEEEPQKKLPVTFEDKRKANYERGNMELEKR) is disordered. Residues 339-350 (DSVNGTLPSYQK) are compositionally biased toward polar residues. Residues 351-382 (TQEEEPQKKLPVTFEDKRKANYERGNMELEKR) show a composition bias toward basic and acidic residues. The stretch at 365–717 (EDKRKANYER…KAEAKQSETA (353 aa)) forms a coiled coil. Tyrosine 554 carries the phosphotyrosine modification. Threonine 574 is subject to Phosphothreonine. The span at 689-713 (KQKRLQEEKSQDKTQEEERKAEAKQ) shows a compositional bias: basic and acidic residues. A disordered region spans residues 689-715 (KQKRLQEEKSQDKTQEEERKAEAKQSE). An SH3 1 domain is found at 718–779 (SALVNYRALY…PCNYVEKVLS (62 aa)). Threonine 836 is subject to Phosphothreonine. Phosphoserine occurs at positions 838 and 843. One can recognise an SH3 2 domain in the interval 852–910 (VENLKAQALCSWTAKKENHLNFSKHDVITVLEQQENWWFGEVHGGRGWFPKSYVKLIPG). The residue at position 922 (tyrosine 922) is a Phosphotyrosine. SH3 domains are found at residues 942–1000 (PVGE…PKDQ), 1014–1078 (KKPE…LLGP), and 1088–1147 (HAVC…MTTD). The region spanning 1170–1357 (KRQGYIHELI…EELCSQVNEG (188 aa)) is the DH domain. In terms of domain architecture, PH spans 1396-1506 (KLLHSGKLYK…WVQKIKGASE (111 aa)). The C2 domain occupies 1514–1630 (KKREKAYQAR…RTEQESKGPT (117 aa)). Ca(2+)-binding residues include aspartate 1602, serine 1605, and aspartate 1608.

Belongs to a complex that may contain multimers of ITSN1, ITSN2 and EPS15, and different partners according to the step in the endocytic process. Interacts with ADAM15. Interacts with FASLG. Interacts with ANKRD54. Interacts with FCHO2. Ca(2+) is required as a cofactor. In terms of tissue distribution, widely expressed in adult tissues.

It is found in the cytoplasm. Its function is as follows. Adapter protein that may provide indirect link between the endocytic membrane traffic and the actin assembly machinery. May regulate the formation of clathrin-coated vesicles (CCPs). Seems to be involved in CCPs maturation including invagination or budding. Involved in endocytosis of integrin beta-1 (ITGB1) and transferrin receptor (TFR). Plays a role in dendrite formation by melanocytes. In Mus musculus (Mouse), this protein is Intersectin-2 (Itsn2).